The sequence spans 235 residues: Glucosamine-6-phosphate deaminase (235 aa).

The active-site Proton acceptor; for enolization step is Asp62. The active-site For ring-opening step is Asn128. Residue His130 is the Proton acceptor; for ring-opening step of the active site. Glu135 serves as the catalytic For ring-opening step.

This sequence belongs to the glucosamine/galactosamine-6-phosphate isomerase family. NagB subfamily.

It catalyses the reaction alpha-D-glucosamine 6-phosphate + H2O = beta-D-fructose 6-phosphate + NH4(+). The protein operates within amino-sugar metabolism; N-acetylneuraminate degradation; D-fructose 6-phosphate from N-acetylneuraminate: step 5/5. Catalyzes the reversible isomerization-deamination of glucosamine 6-phosphate (GlcN6P) to form fructose 6-phosphate (Fru6P) and ammonium ion. The chain is Glucosamine-6-phosphate deaminase from Lactococcus lactis subsp. lactis (strain IL1403) (Streptococcus lactis).